The primary structure comprises 122 residues: Large ribosomal subunit protein uL14 (122 aa).

This sequence belongs to the universal ribosomal protein uL14 family. Part of the 50S ribosomal subunit. Forms a cluster with proteins L3 and L19. In the 70S ribosome, L14 and L19 interact and together make contacts with the 16S rRNA in bridges B5 and B8.

Its function is as follows. Binds to 23S rRNA. Forms part of two intersubunit bridges in the 70S ribosome. This is Large ribosomal subunit protein uL14 from Mycobacteroides abscessus (strain ATCC 19977 / DSM 44196 / CCUG 20993 / CIP 104536 / JCM 13569 / NCTC 13031 / TMC 1543 / L948) (Mycobacterium abscessus).